We begin with the raw amino-acid sequence, 347 residues long: Cyclic AMP-dependent transcription factor ATF-4 (347 aa).

A disordered region spans residues T202–R296. T211 is subject to Phosphothreonine. Residues S213, S217, S222, S229, and S233 each carry the phosphoserine modification. The short motif at S213–S222 is the BetaTrCP degron motif element. A compositionally biased stretch (polar residues) spans G228–R238. At P234 the chain carries 4-hydroxyproline. Residues S243 and S246 each carry the phosphoserine modification. Residues K256 and K268 each participate in a glycyl lysine isopeptide (Lys-Gly) (interchain with G-Cter in SUMO2) cross-link. Over residues V269 to Q283 the composition is skewed to basic and acidic residues. Positions L274–V337 constitute a bZIP domain. Positions K276 to R296 are basic motif. The interval A301 to V337 is interaction with GABBR1. Positions L302 to L330 are leucine-zipper. An N6-acetyllysine modification is found at K307.

It belongs to the bZIP family. In terms of assembly, binds DNA as a homodimer and as a heterodimer. Heterodimer; heterodimerizes with CEBPB. Heterodimer; heterodimerizes with DDIT3/CHOP. Interacts with CEP290 (via an N-terminal region). Interacts with NEK6, DAPK2 (isoform 2) and ZIPK/DAPK3. Interacts (via its leucine zipper domain) with GABBR1 and GABBR2 (via their C-termini). Forms a heterodimer with TXLNG in osteoblasts. Interacts (via its DNA binding domain) with FOXO1 (C-terminal half); the interaction occurs in osteoblasts and regulates glucose homeostasis through suppression of beta-cell proliferation and a decrease in insulin production. Interacts with SATB2; the interaction results in enhanced DNA binding and transactivation by these transcription factors. Interacts with ABRAXAS2. Interacts with TRIB3, inhibiting the transactivation activity of ATF4. Interacts with DISC1; which inhibits ATF4 transcription factor activity by disrupting ATF4 dimerization and DNA-binding. Interacts with EP300/p300; EP300/p300 stabilizes ATF4 and increases its transcriptional activity independently of its catalytic activity by preventing its ubiquitination. Ubiquitinated by SCF(BTRC) in response to mTORC1 signal, followed by proteasomal degradation and leading to down-regulate expression of SIRT4. Interaction with EP300/p300 inhibits ubiquitination by SCF(BTRC). In terms of processing, phosphorylation at Ser-243 by RPS6KA3/RSK2 in osteoblasts enhances transactivation activity and promotes osteoblast differentiation. Phosphorylated on the betaTrCP degron motif at Ser-217, followed by phosphorylation at Thr-211, Ser-222, Ser-229, Ser-233 and Ser-246, promoting interaction with BTRC and ubiquitination. Phosphorylation is promoted by mTORC1. Phosphorylation at Ser-213 by CK2 decreases its stability. Phosphorylated by NEK6. Post-translationally, hydroxylated by PHD3, leading to decreased protein stability. In terms of tissue distribution, expressed in brain, heart, liver, spleen, lung and muscle, but not testis.

The protein localises to the nucleus. It localises to the nucleus speckle. Its subcellular location is the cytoplasm. It is found in the cell membrane. The protein resides in the cytoskeleton. The protein localises to the microtubule organizing center. It localises to the centrosome. In terms of biological role, transcription factor that binds the cAMP response element (CRE) (consensus: 5'-GTGACGT[AC][AG]-3') and displays two biological functions, as regulator of metabolic and redox processes under normal cellular conditions, and as master transcription factor during integrated stress response (ISR). Binds to asymmetric CRE's as a heterodimer and to palindromic CRE's as a homodimer. Core effector of the ISR, which is required for adaptation to various stress such as endoplasmic reticulum (ER) stress, amino acid starvation, mitochondrial stress or oxidative stress. During ISR, ATF4 translation is induced via an alternative ribosome translation re-initiation mechanism in response to EIF2S1/eIF-2-alpha phosphorylation, and stress-induced ATF4 acts as a master transcription factor of stress-responsive genes in order to promote cell recovery. Promotes the transcription of genes linked to amino acid sufficiency and resistance to oxidative stress to protect cells against metabolic consequences of ER oxidation. Activates the transcription of NLRP1, possibly in concert with other factors in response to ER stress. Activates the transcription of asparagine synthetase (ASNS) in response to amino acid deprivation or ER stress. However, when associated with DDIT3/CHOP, the transcriptional activation of the ASNS gene is inhibited in response to amino acid deprivation. Together with DDIT3/CHOP, mediates programmed cell death by promoting the expression of genes involved in cellular amino acid metabolic processes, mRNA translation and the terminal unfolded protein response (terminal UPR), a cellular response that elicits programmed cell death when ER stress is prolonged and unresolved. Activates the expression of COX7A2L/SCAF1 downstream of the EIF2AK3/PERK-mediated unfolded protein response, thereby promoting formation of respiratory chain supercomplexes and increasing mitochondrial oxidative phosphorylation. Together with DDIT3/CHOP, activates the transcription of the IRS-regulator TRIB3 and promotes ER stress-induced neuronal cell death by regulating the expression of BBC3/PUMA in response to ER stress. May cooperate with the UPR transcriptional regulator QRICH1 to regulate ER protein homeostasis which is critical for cell viability in response to ER stress. In the absence of stress, ATF4 translation is at low levels and it is required for normal metabolic processes such as embryonic lens formation, fetal liver hematopoiesis, bone development and synaptic plasticity. Acts as a regulator of osteoblast differentiation in response to phosphorylation by RPS6KA3/RSK2: phosphorylation in osteoblasts enhances transactivation activity and promotes expression of osteoblast-specific genes and post-transcriptionally regulates the synthesis of Type I collagen, the main constituent of the bone matrix. Cooperates with FOXO1 in osteoblasts to regulate glucose homeostasis through suppression of beta-cell production and decrease in insulin production. Activates transcription of SIRT4. Regulates the circadian expression of the core clock component PER2 and the serotonin transporter SLC6A4. Binds in a circadian time-dependent manner to the cAMP response elements (CRE) in the SLC6A4 and PER2 promoters and periodically activates the transcription of these genes. Mainly acts as a transcriptional activator in cellular stress adaptation, but it can also act as a transcriptional repressor: acts as a regulator of synaptic plasticity by repressing transcription, thereby inhibiting induction and maintenance of long-term memory. Regulates synaptic functions via interaction with DISC1 in neurons, which inhibits ATF4 transcription factor activity by disrupting ATF4 dimerization and DNA-binding. This chain is Cyclic AMP-dependent transcription factor ATF-4, found in Rattus norvegicus (Rat).